The primary structure comprises 871 residues: DNA mismatch repair protein MutS (871 aa).

Residue 625-632 (GPNMAGKS) coordinates ATP.

This sequence belongs to the DNA mismatch repair MutS family.

Functionally, this protein is involved in the repair of mismatches in DNA. It is possible that it carries out the mismatch recognition step. This protein has a weak ATPase activity. The polypeptide is DNA mismatch repair protein MutS (Chlorobium limicola (strain DSM 245 / NBRC 103803 / 6330)).